Consider the following 585-residue polypeptide: MITRMSELFLRTLRDDPADAEVPSHKLLIRAGYVRAVGPGIYSWLPLGLRVLRKIENVVRSEMNAIGAQEILLPALLPRGPYETTNRWTEYGDTLFRLQDRRNNDYLLGPTHEELFTLTVKGEYSSYKDFPVILYQIQTKYRDEARPRAGILRGREFVMKDSYSFDVDDDGLKNAYYQHREAYQRIFARLGVRYVIVSAVSGAMGGSASEEFLAESEVGEDTFVRCVESGYAANVEAVITRAPEAQPTEGLPEAKVYDTPDTPTIATLVEWANSASLPQFEGRTVTAADTLKNVLLKTREPGGEWELLAVGVPGDREVDEKRLGAALEPAEFALLDDADFAANPFLVKGYVGPKALQDNGVRYLVDPRVVHGSSWITGADAPNRHVVGLVAGRDFTPDGTIEAAEVRDGDPSPDGAGVLTSARGIEIGHIFQLGRKYTDAFSADVLGEDGKPLRLTMGSYGIGVSRLVAVIAEQQHDQLGLRWPSSVAPFDVHVVVANKDAGARAGAAELVADLDRLGHEVLFDDRQASPGVKFKDAELLGMPWIVVVGRGWADGVVELRNRFTGETREIAADGAAAEISSVLAG.

An Isoglutamyl lysine isopeptide (Lys-Gln) (interchain with Q-Cter in protein Pup) cross-link involves residue Lys-173.

Belongs to the class-II aminoacyl-tRNA synthetase family. ProS type 1 subfamily. Homodimer.

It localises to the cytoplasm. It carries out the reaction tRNA(Pro) + L-proline + ATP = L-prolyl-tRNA(Pro) + AMP + diphosphate. In terms of biological role, catalyzes the attachment of proline to tRNA(Pro) in a two-step reaction: proline is first activated by ATP to form Pro-AMP and then transferred to the acceptor end of tRNA(Pro). As ProRS can inadvertently accommodate and process non-cognate amino acids such as alanine and cysteine, to avoid such errors it has two additional distinct editing activities against alanine. One activity is designated as 'pretransfer' editing and involves the tRNA(Pro)-independent hydrolysis of activated Ala-AMP. The other activity is designated 'posttransfer' editing and involves deacylation of mischarged Ala-tRNA(Pro). The misacylated Cys-tRNA(Pro) is not edited by ProRS. This chain is Proline--tRNA ligase (proS), found in Mycolicibacterium smegmatis (strain ATCC 700084 / mc(2)155) (Mycobacterium smegmatis).